The primary structure comprises 399 residues: Centrosomal protein 43 (399 aa).

Residues 70 to 102 (DGRLVASLVAEFLQFFNLDFTLAVFQPETSTLQ) form the LisH domain. Disordered regions lie at residues 139-218 (EKGP…SSLH) and 232-308 (NRTL…SESK). Threonine 143 bears the Phosphothreonine mark. Residues serine 152, serine 156, and serine 160 each carry the phosphoserine modification. Residues 163-172 (GKTSAQTTPS) show a composition bias toward polar residues. Threonine 170 carries the post-translational modification Phosphothreonine. Basic residues predominate over residues 175 to 186 (PRYKGQGKKKTS). At serine 202 the chain carries Phosphoserine. Residues 205-218 (SVSLSEPKSKSSLH) show a composition bias toward low complexity. The residue at position 234 (threonine 234) is a Phosphothreonine. Over residues 245 to 256 (PDEDDMEGDSFF) the composition is skewed to acidic residues. Residues 259-275 (PIPKPEKTYGLRKEPRK) show a composition bias toward basic and acidic residues. Residues 286–302 (APPLKSGLSSLAGAPSL) are compositionally biased toward low complexity. Serine 301 and serine 326 each carry phosphoserine. The tract at residues 331–353 (TGEDDDYVDDFNSTSHRSEKSEI) is disordered. Residue tyrosine 337 is modified to Phosphotyrosine.

The protein belongs to the CEP43 family. As to quaternary structure, homodimer. Part of a ternary complex that contains CEP350, CEP43 and MAPRE1. Interacts directly with CEP350 and MAPRE1. Interacts with CEP19. Interacts (via N-terminus) with CEP350 (via C-terminus). In terms of tissue distribution, ubiquitous. Highly expressed in heart, liver, muscle, kidney, intestine, colon, adrenal gland, prostate, testis, and pancreas.

The protein localises to the cytoplasm. The protein resides in the cytoskeleton. It is found in the microtubule organizing center. Its subcellular location is the centrosome. It localises to the centriole. The protein localises to the cilium basal body. Functionally, required for anchoring microtubules to the centrosomes. Required for ciliation. This chain is Centrosomal protein 43, found in Homo sapiens (Human).